The sequence spans 568 residues: Matrix metalloproteinase-21 (568 aa).

Positions 1–24 (MLAASVLRLTLPLCWLVAPQPTQP) are cleaved as a signal peptide. Positions 25–143 (ERLFHSRDRS…SLGLRPRARQ (119 aa)) are excised as a propeptide. Positions 110 to 117 (PRCGVPDT) match the Cysteine switch motif. Residues C112 and H282 each coordinate Zn(2+). Residue E283 is part of the active site. Zn(2+)-binding residues include H286 and H292. A disulfide bond links C328 and C559. Hemopexin repeat units lie at residues 329–388 (KGSF…WRGI), 390–446 (TQSI…FPGI), 447–495 (PSPL…FPAI), and 502–558 (FRNL…WFDV). An N-linked (GlcNAc...) asparagine glycan is attached at N371.

It belongs to the peptidase M10A family. Zn(2+) is required as a cofactor. Requires Ca(2+) as cofactor. In terms of processing, the precursor is cleaved by a furin endopeptidase.

It is found in the secreted. Functionally, plays a specialized role in the generation of left-right asymmetry during embryogenesis. May act as a negative regulator of the NOTCH-signaling pathway. Cleaves alpha-1-antitrypsin. This is Matrix metalloproteinase-21 (Mmp21) from Mus musculus (Mouse).